Reading from the N-terminus, the 342-residue chain is Ribosomal RNA small subunit methyltransferase C (342 aa).

The protein belongs to the methyltransferase superfamily. RsmC family. Monomer.

The protein localises to the cytoplasm. The enzyme catalyses guanosine(1207) in 16S rRNA + S-adenosyl-L-methionine = N(2)-methylguanosine(1207) in 16S rRNA + S-adenosyl-L-homocysteine + H(+). Its function is as follows. Specifically methylates the guanine in position 1207 of 16S rRNA in the 30S particle. The protein is Ribosomal RNA small subunit methyltransferase C of Shewanella piezotolerans (strain WP3 / JCM 13877).